The sequence spans 35 residues: ACQGYMRKCGRDKPPCCKKLECSKTWRWCVWNPWE.

Intrachain disulfides connect Cys-2/Cys-17, Cys-9/Cys-22, and Cys-16/Cys-29.

This sequence belongs to the neurotoxin 10 (Hwtx-1) family. 49 (Jztx-F6) subfamily. As to expression, expressed by the venom gland.

It is found in the secreted. In terms of biological role, probable ion channel inhibitor. The chain is Jingzhaotoxin F6-27.63 from Chilobrachys guangxiensis (Chinese earth tiger tarantula).